The primary structure comprises 102 residues: Trans-acting regulatory protein HvrA (102 aa).

A DNA-binding region spans residues 80–85; it reads RGRKPK.

It belongs to the histone-like protein H-NS family. Homodimer that oligomerizes on DNA into higher-order complexes that form bridges between disparate regions of DNA compacting it.

It localises to the cytoplasm. It is found in the nucleoid. Functionally, a dim-light trans-acting activator of Puf and Puh expression, that has no effect on the expression of the Puc operon. Responsible for regulating light-harvesting-I and reaction center structural gene expression differentially from that of light-harvesting-II expression in response to alterations in light. Proper light regulation of light-harvesting and reaction center polypeptide synthesis is an important physiological trait that enables cells to adapt to ever-changing environmental conditions of light intensity. The sequence is that of Trans-acting regulatory protein HvrA (hvrA) from Rhodobacter capsulatus (Rhodopseudomonas capsulata).